The primary structure comprises 348 residues: 2-methyl-6-phytyl-1,4-hydroquinone methyltransferase 2, chloroplastic (348 aa).

The segment at 1–48 (MAMASSAYAPAGGVGTHSAPGRIRPPRGLGFSTTTTKSRPLVLTRRGG) is disordered. Residues 1 to 59 (MAMASSAYAPAGGVGTHSAPGRIRPPRGLGFSTTTTKSRPLVLTRRGGGGGNISVARLR) constitute a chloroplast transit peptide. Residues 60–317 (CAASSSSAAA…PVNPITFLFR (258 aa)) are Chloroplast intermembrane-facing. The segment at 125-134 (VVDVGGGTGF) is SAM motif I. Residues 170 to 183 (VTIMEGDAEDLPFP) form an SAM motif II region. The interval 211–224 (RVLRLGGVACMIGP) is SAM motif III. The helical transmembrane segment at 318 to 338 (FLMGTICAAYYVLVPIYMWIK) threads the bilayer. Over 339-348 (DQIVPKGMPI) the chain is Stromal.

The protein belongs to the class I-like SAM-binding methyltransferase superfamily. MPBQ/MBSQ MT family.

Its subcellular location is the plastid. The protein localises to the chloroplast inner membrane. The catalysed reaction is 2-methyl-6-phytyl-1,4-benzene-1,4-diol + S-adenosyl-L-methionine = 2,3-dimethyl-6-phytylbenzene-1,4-diol + S-adenosyl-L-homocysteine + H(+). It catalyses the reaction 2-methyl-6-(all-trans-nonaprenyl)benzene-1,4-diol + S-adenosyl-L-methionine = plastoquinol-9 + S-adenosyl-L-homocysteine + H(+). The enzyme catalyses 6-geranylgeranyl-2-methylbenzene-1,4-diol + S-adenosyl-L-methionine = 6-geranylgeranyl-2,3-dimethylbenzene-1,4-diol + S-adenosyl-L-homocysteine + H(+). It functions in the pathway cofactor biosynthesis; tocopherol biosynthesis. Functionally, involved in a key methylation step in both tocopherols (vitamin E) and plastoquinone synthesis. Catalyzes the conversion of 2-methyl-6-phytyl-1,4-hydroquinone (MPBQ) to 2,3-dimethyl-6-phytyl-1,4-hydroquinone (DMPQ, a substrate for tocopherol cyclase), and 2-methyl-6-solanyl-1,4-benzoquinone (MSBQ) to plastoquinone. The polypeptide is 2-methyl-6-phytyl-1,4-hydroquinone methyltransferase 2, chloroplastic (Oryza sativa subsp. japonica (Rice)).